A 67-amino-acid chain; its full sequence is Large ribosomal subunit protein bL35 (67 aa).

This sequence belongs to the bacterial ribosomal protein bL35 family.

The sequence is that of Large ribosomal subunit protein bL35 from Caldanaerobacter subterraneus subsp. tengcongensis (strain DSM 15242 / JCM 11007 / NBRC 100824 / MB4) (Thermoanaerobacter tengcongensis).